Reading from the N-terminus, the 85-residue chain is Large ribosomal subunit protein bL27 (85 aa).

It belongs to the bacterial ribosomal protein bL27 family.

The protein is Large ribosomal subunit protein bL27 of Leptospira biflexa serovar Patoc (strain Patoc 1 / Ames).